Reading from the N-terminus, the 115-residue chain is Hydrogenase maturation factor HypA (115 aa).

His2 contacts Ni(2+). Zn(2+) is bound by residues Cys73, Cys76, Cys89, and Cys92.

The protein belongs to the HypA/HybF family.

Involved in the maturation of [NiFe] hydrogenases. Required for nickel insertion into the metal center of the hydrogenase. This chain is Hydrogenase maturation factor HypA, found in Parabacteroides distasonis (strain ATCC 8503 / DSM 20701 / CIP 104284 / JCM 5825 / NCTC 11152).